The chain runs to 28 residues: 14-3-3-like protein 4 (28 aa).

This sequence belongs to the 14-3-3 family.

This is 14-3-3-like protein 4 from Pseudotsuga menziesii (Douglas-fir).